We begin with the raw amino-acid sequence, 1343 residues long: MGYSYSEKKRIRKDFGKRPQVLNVPYLLTIQLDSFDKFIQKDPEGQQGLEAAFRSVFPIVSNNGYTELQYVDYRLEEPEFDVRECQIRGSTYAAGLRVKLRLVSYDKESSSRAVKDIKENEVYMGEIPLMTDNGTFVINGTERVIVSQLHRSPGVFFDSDKGKTHSSGKVLYNARIIPYRGSWLDFEFDPKDNLFARIDRRRKLPATIILRALGYTTEEILNLFFDKITFEIAGDKLLMTLVPERLRGETASFDIEANGKVYVERGRRITARHIKALEKDNISQVVVPSEYILGKVASKDYVDLESGEIICPANGEISLETLAKLAQAGYTTIETLFTNDLDYGPYISETLRVDPTYDKISALYEIYRMMRPGEPPTPESSEALFNNLFFSAERYDLSTVGRMKFNRSLAFPEGEGAGILSNEDIIAVMRKLIDIRNGRGEVDDIDHLGNRRIRSVGEMAENQFRIGLVRVERAVKERLSLGDLDAITPQDLINPKPISAAVKEFFGSSQLSQFMDQNNPLSEVTHKRRISALGPGGLTRERAGFEVRDVHNTHYGRLCPIETPEGPNIGLINSLSAFARTNDYGFLETPYRKVVDGQVTEEIEYLSVIDEANYIIAQANSNLDENNRFTDAFVTARGERGESGLYKPEDIHYMDVSTQQVVSVAAALIPFLEHDDANRALMGANMQRQAVPTLRADKPLVGTGMEKPIALDSGVAVVAKRGGTVQYVDASRIVIKVNEDETIAGEAGIDIYNLIKYTRSNQNTCINQIPCVNLGDPINRGEVLADGPSTDLGELALGQNIRVAFMPWNGYNFEDSMLVSERVVQQDRFTTIHIQELSCVARDTKLGAEEITADIPNVGESALSKLDESGIVYVGAEVKGGDILVGKVTPKGETQLTPEEKLLRAIFGEKASDVKDSSLRVPNGTSGTVIDVQVFTRDGVEKDKRALEIEEMQLREAKKDLTEELEILEAGLFARVRNLLISSGADAAQLDKVDRTKWLEQTIADEEKQNQLEQLAEQYEELRKEFEHKLEVKRKKIIKGDDLAPGVLKVVKVYLAVKRQIQPGDKMAGRHGNKGVISKINPVEDMPYDENGQPVEIVLNPLGVPSRMNIGQILETHLGLAAKGIGDQINAMLKQKQEVEKLRSYIQKAYDLLGNGSQKVDLSTFTDEEVLRLAGNLRKGLPVATPVFDGADEAEIKELLKLGGLPTSGQITLYDGRTGEKFERPVTVGYMYMLKLNHLVDDKMHARSTGSYSLVTQQPLGGKAQFGGQRFGEMEVWALEAYGAAYTLQEMLTVKSDDVNGRTKMYKNIVSGNQHMEPGTPESFNVIMKEIRSLGLNIELDEE.

The protein belongs to the RNA polymerase beta chain family. The RNAP catalytic core consists of 2 alpha, 1 beta, 1 beta' and 1 omega subunit. When a sigma factor is associated with the core the holoenzyme is formed, which can initiate transcription.

It carries out the reaction RNA(n) + a ribonucleoside 5'-triphosphate = RNA(n+1) + diphosphate. In terms of biological role, DNA-dependent RNA polymerase catalyzes the transcription of DNA into RNA using the four ribonucleoside triphosphates as substrates. The polypeptide is DNA-directed RNA polymerase subunit beta (Haemophilus influenzae (strain PittGG)).